Reading from the N-terminus, the 97-residue chain is RxLR effector protein PexRD21 (97 aa).

The first 21 residues, methionine 1–alanine 21, serve as a signal peptide directing secretion. Residues arginine 48 to arginine 66 carry the RxLR-dEER motif.

Belongs to the RxLR effector family.

The protein resides in the secreted. The protein localises to the host cell membrane. Its function is as follows. Effector that is involved in host plant infection. Contributes to virulence during the early infection stage, by inhibiting plant defense responses induced by both PAMP-triggered immunity (PTI) and effector-triggered immunity (ETI). The sequence is that of RxLR effector protein PexRD21 from Phytophthora infestans (strain T30-4) (Potato late blight agent).